A 582-amino-acid chain; its full sequence is Proline--tRNA ligase (582 aa).

The protein belongs to the class-II aminoacyl-tRNA synthetase family. ProS type 1 subfamily. In terms of assembly, homodimer.

Its subcellular location is the cytoplasm. It carries out the reaction tRNA(Pro) + L-proline + ATP = L-prolyl-tRNA(Pro) + AMP + diphosphate. Catalyzes the attachment of proline to tRNA(Pro) in a two-step reaction: proline is first activated by ATP to form Pro-AMP and then transferred to the acceptor end of tRNA(Pro). As ProRS can inadvertently accommodate and process non-cognate amino acids such as alanine and cysteine, to avoid such errors it has two additional distinct editing activities against alanine. One activity is designated as 'pretransfer' editing and involves the tRNA(Pro)-independent hydrolysis of activated Ala-AMP. The other activity is designated 'posttransfer' editing and involves deacylation of mischarged Ala-tRNA(Pro). The misacylated Cys-tRNA(Pro) is not edited by ProRS. In Mycobacterium bovis (strain ATCC BAA-935 / AF2122/97), this protein is Proline--tRNA ligase.